A 262-amino-acid chain; its full sequence is Triosephosphate isomerase (262 aa).

Position 9–11 (N9–K11) interacts with substrate. The active-site Electrophile is H99. Catalysis depends on E171, which acts as the Proton acceptor. Substrate is bound by residues G177 and S216.

This sequence belongs to the triosephosphate isomerase family. Homodimer.

It is found in the cytoplasm. The enzyme catalyses D-glyceraldehyde 3-phosphate = dihydroxyacetone phosphate. The protein operates within carbohydrate biosynthesis; gluconeogenesis. It participates in carbohydrate degradation; glycolysis; D-glyceraldehyde 3-phosphate from glycerone phosphate: step 1/1. In terms of biological role, involved in the gluconeogenesis. Catalyzes stereospecifically the conversion of dihydroxyacetone phosphate (DHAP) to D-glyceraldehyde-3-phosphate (G3P). The sequence is that of Triosephosphate isomerase from Blochmanniella floridana.